The chain runs to 466 residues: IQ domain-containing protein C (466 aa).

One can recognise an IQ domain in the interval 6–35; the sequence is LVRKVSALQACVRGFLVRRQFQSLRAEYEA. Disordered regions lie at residues 105–157, 214–233, 238–310, and 394–466; these read KSGE…PHSQ, EQAC…DQSY, TGEL…QTFG, and VLDL…EPPG. Over residues 132-153 the composition is skewed to basic and acidic residues; sequence PSQEKTRDTTRMENPEATDQRL. Residues 282–293 are compositionally biased toward polar residues; it reads GPPSSIPSNSQA. Residues 297–306 show a composition bias toward basic and acidic residues; that stretch reads RLTKGPDDGR. Ser-438 is subject to Phosphoserine.

In Homo sapiens (Human), this protein is IQ domain-containing protein C (IQCC).